Here is a 591-residue protein sequence, read N- to C-terminus: uncharacterized protein (591 aa).

Over residues 1–10 (MSIRGVGGNG) the composition is skewed to gly residues. 4 disordered regions span residues 1 to 37 (MSIR…KVED), 110 to 135 (RSSA…GYRE), 324 to 344 (EESG…AQGP), and 487 to 517 (GHYQ…TPPL). Residues 11–32 (NSRIPSHNGDGSNRRSQNTKGN) are compositionally biased toward polar residues. A compositionally biased stretch (low complexity) spans 110–132 (RSSATRAAESGSSSRTARGASSG). Residues 490–507 (QDPRASDYDLPRASDYDL) show a composition bias toward basic and acidic residues.

To C.muridarum TC_0268.

This is an uncharacterized protein from Chlamydia trachomatis serovar D (strain ATCC VR-885 / DSM 19411 / UW-3/Cx).